The chain runs to 952 residues: Translation initiation factor IF-2 (952 aa).

Disordered stretches follow at residues glutamine 74 to lysine 95, alanine 153 to proline 204, methionine 230 to aspartate 256, and aspartate 273 to aspartate 319. Low complexity predominate over residues alanine 153–alanine 168. The span at serine 232–arginine 242 shows a compositional bias: basic and acidic residues. The segment covering proline 286–alanine 303 has biased composition (low complexity). A tr-type G domain is found at isoleucine 449–lysine 619. The tract at residues glycine 458 to threonine 465 is G1. Residue glycine 458–threonine 465 coordinates GTP. A G2 region spans residues glycine 483–histidine 487. Residues aspartate 505–glycine 508 form a G3 region. GTP is bound by residues aspartate 505–histidine 509 and asparagine 559–aspartate 562. The interval asparagine 559–aspartate 562 is G4. The G5 stretch occupies residues serine 595–lysine 597.

Belongs to the TRAFAC class translation factor GTPase superfamily. Classic translation factor GTPase family. IF-2 subfamily.

The protein resides in the cytoplasm. Its function is as follows. One of the essential components for the initiation of protein synthesis. Protects formylmethionyl-tRNA from spontaneous hydrolysis and promotes its binding to the 30S ribosomal subunits. Also involved in the hydrolysis of GTP during the formation of the 70S ribosomal complex. The protein is Translation initiation factor IF-2 of Chlorobium limicola (strain DSM 245 / NBRC 103803 / 6330).